We begin with the raw amino-acid sequence, 481 residues long: Phosphoglycerate kinase, chloroplastic (481 aa).

The transit peptide at 1-75 (MASATASHTL…SSKPIRGVAS (75 aa)) directs the protein to the chloroplast. (2R)-3-phosphoglycerate is bound by residues alanine 98, aspartate 99, asparagine 101, arginine 115, serine 137, histidine 138, glycine 140, arginine 141, arginine 196, histidine 228, and arginine 229. Glycine 274 lines the ADP pocket. A CDP-binding site is contributed by glycine 274. Residues lysine 276 and lysine 280 each coordinate AMP. Lysine 280 is an ATP binding site. Glycine 298 is a binding site for ADP. Glycine 298 contacts CDP. AMP is bound by residues glycine 299 and glycine 371. Residues glycine 299 and glycine 371 each coordinate ATP. Residues glycine 396 and phenylalanine 401 each coordinate CDP. Phenylalanine 401 is an ADP binding site. Glutamate 402 contributes to the AMP binding site. Glutamate 402, aspartate 433, and serine 434 together coordinate ATP. Aspartate 433 serves as a coordination point for Mg(2+).

This sequence belongs to the phosphoglycerate kinase family. In terms of assembly, monomer. Mg(2+) is required as a cofactor.

It is found in the plastid. Its subcellular location is the chloroplast. The catalysed reaction is (2R)-3-phosphoglycerate + ATP = (2R)-3-phospho-glyceroyl phosphate + ADP. It participates in carbohydrate biosynthesis; Calvin cycle. This Nicotiana tabacum (Common tobacco) protein is Phosphoglycerate kinase, chloroplastic.